Reading from the N-terminus, the 133-residue chain is MIIGIGSDLCDIRRIEKSLERFGDRFTHKVFTETERTRSERKPDRASSYAKRFAAKEACSKALGTGLKRGVHLAGMGVVNLPSGQPTMALTGGALERLKAMVPEGMEPVIHLSLTDDHPYAQAFVIIEALPKR.

Residues D8 and E57 each contribute to the Mg(2+) site.

Belongs to the P-Pant transferase superfamily. AcpS family. Mg(2+) serves as cofactor.

The protein resides in the cytoplasm. It carries out the reaction apo-[ACP] + CoA = holo-[ACP] + adenosine 3',5'-bisphosphate + H(+). In terms of biological role, transfers the 4'-phosphopantetheine moiety from coenzyme A to a Ser of acyl-carrier-protein. This Caulobacter vibrioides (strain ATCC 19089 / CIP 103742 / CB 15) (Caulobacter crescentus) protein is Holo-[acyl-carrier-protein] synthase.